We begin with the raw amino-acid sequence, 207 residues long: MIKLFVGLGNPGPEYEDTRHNAGFWWIDALARELKVQLVPERSYFGLMARASVRGENVWLLQPQTFMNLSGKSVGALARFFKIQPEEVLVVHDELDFEPGQVKLKRGGSHGGHNGLRDIHAQLGSADYWRLRIGIGHPGHKAEVANWVLKKPAPDQRQLIEDSIAHSLKAWPELQAGNMDKATLLIHTTKPPRPKPARPATAESDKG.

Residue Tyr15 participates in tRNA binding. Residue His20 is the Proton acceptor of the active site. TRNA is bound by residues Phe66, Asn68, and Asn114. The segment at 187-207 (HTTKPPRPKPARPATAESDKG) is disordered. Residues 198–207 (RPATAESDKG) are compositionally biased toward low complexity.

It belongs to the PTH family. In terms of assembly, monomer.

It localises to the cytoplasm. It catalyses the reaction an N-acyl-L-alpha-aminoacyl-tRNA + H2O = an N-acyl-L-amino acid + a tRNA + H(+). Functionally, hydrolyzes ribosome-free peptidyl-tRNAs (with 1 or more amino acids incorporated), which drop off the ribosome during protein synthesis, or as a result of ribosome stalling. Its function is as follows. Catalyzes the release of premature peptidyl moieties from peptidyl-tRNA molecules trapped in stalled 50S ribosomal subunits, and thus maintains levels of free tRNAs and 50S ribosomes. This Delftia acidovorans (strain DSM 14801 / SPH-1) protein is Peptidyl-tRNA hydrolase.